The chain runs to 282 residues: D-alanine aminotransferase (282 aa).

Residue Y32 coordinates substrate. R51 is a pyridoxal 5'-phosphate binding site. Substrate-binding residues include R99 and H101. K146 serves as the catalytic Proton acceptor. K146 is subject to N6-(pyridoxal phosphate)lysine. Residue E178 participates in pyridoxal 5'-phosphate binding.

It belongs to the class-IV pyridoxal-phosphate-dependent aminotransferase family. In terms of assembly, homodimer. Pyridoxal 5'-phosphate is required as a cofactor.

The enzyme catalyses D-alanine + 2-oxoglutarate = D-glutamate + pyruvate. Acts on the D-isomers of alanine, leucine, aspartate, glutamate, aminobutyrate, norvaline and asparagine. The enzyme transfers an amino group from a substrate D-amino acid to the pyridoxal phosphate cofactor to form pyridoxamine and an alpha-keto acid in the first half-reaction. The second half-reaction is the reverse of the first, transferring the amino group from the pyridoxamine to a second alpha-keto acid to form the product D-amino acid via a ping-pong mechanism. This is an important process in the formation of D-alanine and D-glutamate, which are essential bacterial cell wall components. This Staphylococcus epidermidis (strain ATCC 35984 / DSM 28319 / BCRC 17069 / CCUG 31568 / BM 3577 / RP62A) protein is D-alanine aminotransferase (dat).